An 853-amino-acid chain; its full sequence is Transcription factor macR (853 aa).

The segment at residues 18 to 45 (CIVCRRRKVRCGREQPECANCVRMKENC) is a DNA-binding region (zn(2)-C6 fungal-type). Disordered regions lie at residues 54–122 (ESTG…PYPT), 138–166 (ANAP…PTPS), 734–775 (ASDL…AGNK), and 833–853 (LGSQ…DFPG). Polar residues-rich tracts occupy residues 104 to 116 (PQVS…SPQR), 141 to 163 (PQIN…SLFP), and 738 to 752 (RATS…SSTT).

The protein resides in the nucleus. Its function is as follows. Transcription factor that regulates the expression of the gene cluster that mediates the biosynthesis of macrophorins, isoprenoid epoxycyclohexenones containing cyclized drimane moieties. This chain is Transcription factor macR, found in Penicillium terrestre.